Here is a 104-residue protein sequence, read N- to C-terminus: Small ribosomal subunit protein bS18c (104 aa).

It belongs to the bacterial ribosomal protein bS18 family. As to quaternary structure, part of the 30S ribosomal subunit.

The protein resides in the plastid. It is found in the chloroplast. The chain is Small ribosomal subunit protein bS18c from Lotus japonicus (Lotus corniculatus var. japonicus).